The following is a 55-amino-acid chain: Large ribosomal subunit protein bL33 (55 aa).

Basic and acidic residues predominate over residues 1–11 (MAKGGREKIKL). The segment at 1–29 (MAKGGREKIKLESTAGTGHFYTTTKNKKT) is disordered. Residues 14-24 (TAGTGHFYTTT) are compositionally biased toward polar residues.

This sequence belongs to the bacterial ribosomal protein bL33 family.

The chain is Large ribosomal subunit protein bL33 from Thiobacillus denitrificans (strain ATCC 25259 / T1).